The chain runs to 288 residues: 4-hydroxy-tetrahydrodipicolinate synthase (288 aa).

Residue threonine 42 participates in pyruvate binding. Tyrosine 129 (proton donor/acceptor) is an active-site residue. The active-site Schiff-base intermediate with substrate is the lysine 158. Residue isoleucine 200 participates in pyruvate binding.

This sequence belongs to the DapA family. In terms of assembly, homotetramer; dimer of dimers.

It localises to the cytoplasm. It catalyses the reaction L-aspartate 4-semialdehyde + pyruvate = (2S,4S)-4-hydroxy-2,3,4,5-tetrahydrodipicolinate + H2O + H(+). It functions in the pathway amino-acid biosynthesis; L-lysine biosynthesis via DAP pathway; (S)-tetrahydrodipicolinate from L-aspartate: step 3/4. Catalyzes the condensation of (S)-aspartate-beta-semialdehyde [(S)-ASA] and pyruvate to 4-hydroxy-tetrahydrodipicolinate (HTPA). This Thermosipho melanesiensis (strain DSM 12029 / CIP 104789 / BI429) protein is 4-hydroxy-tetrahydrodipicolinate synthase.